Reading from the N-terminus, the 115-residue chain is MRSAKLKFEKRRSRIRHKISKTSNRVRLSIFKSGRHIYAQIIDDSKSITIAAASTLDEKRKKSHCNIEHAIKVGEEIAKKAYAAGIKDVVFDRGGYKYHGVVKALADAAREKIKF.

This sequence belongs to the universal ribosomal protein uL18 family. Part of the 50S ribosomal subunit; part of the 5S rRNA/L5/L18/L25 subcomplex. Contacts the 5S and 23S rRNAs.

In terms of biological role, this is one of the proteins that bind and probably mediate the attachment of the 5S RNA into the large ribosomal subunit, where it forms part of the central protuberance. This is Large ribosomal subunit protein uL18 from Rickettsia rickettsii (strain Iowa).